The primary structure comprises 138 residues: Nucleoside diphosphate kinase (138 aa).

ATP-binding residues include Lys10, Phe58, Arg86, Thr92, Arg103, and Asn113. His116 functions as the Pros-phosphohistidine intermediate in the catalytic mechanism.

This sequence belongs to the NDK family. Homotetramer. Mg(2+) is required as a cofactor.

It is found in the cytoplasm. The enzyme catalyses a 2'-deoxyribonucleoside 5'-diphosphate + ATP = a 2'-deoxyribonucleoside 5'-triphosphate + ADP. It catalyses the reaction a ribonucleoside 5'-diphosphate + ATP = a ribonucleoside 5'-triphosphate + ADP. Its function is as follows. Major role in the synthesis of nucleoside triphosphates other than ATP. The ATP gamma phosphate is transferred to the NDP beta phosphate via a ping-pong mechanism, using a phosphorylated active-site intermediate. The polypeptide is Nucleoside diphosphate kinase (Actinobacillus pleuropneumoniae serotype 7 (strain AP76)).